The chain runs to 570 residues: Adenine deaminase 2 (570 aa).

The protein belongs to the metallo-dependent hydrolases superfamily. Adenine deaminase family. The cofactor is Mn(2+).

The catalysed reaction is adenine + H2O + H(+) = hypoxanthine + NH4(+). The protein is Adenine deaminase 2 of Carboxydothermus hydrogenoformans (strain ATCC BAA-161 / DSM 6008 / Z-2901).